Consider the following 219-residue polypeptide: Ribose-5-phosphate isomerase A (219 aa).

Residues 28 to 31 (TGST), 81 to 84 (DGAD), and 94 to 97 (KGGG) each bind substrate. The Proton acceptor role is filled by glutamate 103. Lysine 121 serves as a coordination point for substrate.

Belongs to the ribose 5-phosphate isomerase family. As to quaternary structure, homodimer.

It catalyses the reaction aldehydo-D-ribose 5-phosphate = D-ribulose 5-phosphate. It functions in the pathway carbohydrate degradation; pentose phosphate pathway; D-ribose 5-phosphate from D-ribulose 5-phosphate (non-oxidative stage): step 1/1. In terms of biological role, catalyzes the reversible conversion of ribose-5-phosphate to ribulose 5-phosphate. In Shewanella loihica (strain ATCC BAA-1088 / PV-4), this protein is Ribose-5-phosphate isomerase A.